A 360-amino-acid chain; its full sequence is tRNA N6-adenosine threonylcarbamoyltransferase (360 aa).

2 residues coordinate Fe cation: H115 and H119. Residues 137-141 (LVSGG), D170, G183, and N283 each bind substrate. Residue D311 coordinates Fe cation.

This sequence belongs to the KAE1 / TsaD family. Fe(2+) serves as cofactor.

Its subcellular location is the cytoplasm. The catalysed reaction is L-threonylcarbamoyladenylate + adenosine(37) in tRNA = N(6)-L-threonylcarbamoyladenosine(37) in tRNA + AMP + H(+). Its function is as follows. Required for the formation of a threonylcarbamoyl group on adenosine at position 37 (t(6)A37) in tRNAs that read codons beginning with adenine. Is involved in the transfer of the threonylcarbamoyl moiety of threonylcarbamoyl-AMP (TC-AMP) to the N6 group of A37, together with TsaE and TsaB. TsaD likely plays a direct catalytic role in this reaction. In Rhizobium meliloti (strain 1021) (Ensifer meliloti), this protein is tRNA N6-adenosine threonylcarbamoyltransferase.